Here is a 195-residue protein sequence, read N- to C-terminus: ATP-dependent Clp protease proteolytic subunit (195 aa).

Catalysis depends on serine 98, which acts as the Nucleophile. The active site involves histidine 123.

The protein belongs to the peptidase S14 family. As to quaternary structure, fourteen ClpP subunits assemble into 2 heptameric rings which stack back to back to give a disk-like structure with a central cavity, resembling the structure of eukaryotic proteasomes.

It localises to the cytoplasm. It catalyses the reaction Hydrolysis of proteins to small peptides in the presence of ATP and magnesium. alpha-casein is the usual test substrate. In the absence of ATP, only oligopeptides shorter than five residues are hydrolyzed (such as succinyl-Leu-Tyr-|-NHMec, and Leu-Tyr-Leu-|-Tyr-Trp, in which cleavage of the -Tyr-|-Leu- and -Tyr-|-Trp bonds also occurs).. Functionally, cleaves peptides in various proteins in a process that requires ATP hydrolysis. Has a chymotrypsin-like activity. Plays a major role in the degradation of misfolded proteins. This is ATP-dependent Clp protease proteolytic subunit from Thermodesulfovibrio yellowstonii (strain ATCC 51303 / DSM 11347 / YP87).